We begin with the raw amino-acid sequence, 181 residues long: MDELTAQALKAFTTRYCDAWQEKHGSWPLSEELYGVPSPCIISSTRDAVYWQPQPFEGEENVNAVERAFDIMVQPALHAFYTTQFAGDMPAQFADEKLTLLQTWSQDDFRRVQENLIGHLVTQKRLKLPPTLFIATQENELEVISVCNLSGEVIKETLGTRNRTVLAATLAEFLTQLNPLL.

It belongs to the Syd family.

It localises to the cell inner membrane. Its function is as follows. Interacts with the SecY protein in vivo. May bind preferentially to an uncomplexed state of SecY, thus functioning either as a chelating agent for excess SecY in the cell or as a regulatory factor that negatively controls the translocase function. The sequence is that of Protein Syd from Salmonella agona (strain SL483).